We begin with the raw amino-acid sequence, 140 residues long: Anti-sigma F factor (140 aa).

Belongs to the anti-sigma-factor family.

It carries out the reaction L-seryl-[protein] + ATP = O-phospho-L-seryl-[protein] + ADP + H(+). It catalyses the reaction L-threonyl-[protein] + ATP = O-phospho-L-threonyl-[protein] + ADP + H(+). Functionally, binds to sigma F and blocks its ability to form an RNA polymerase holoenzyme (E-sigma F). Phosphorylates SpoIIAA on a serine residue. This phosphorylation may enable SpoIIAA to act as an anti-anti-sigma factor that counteracts SpoIIAB and thus releases sigma F from inhibition. This chain is Anti-sigma F factor, found in Clostridium perfringens (strain ATCC 13124 / DSM 756 / JCM 1290 / NCIMB 6125 / NCTC 8237 / Type A).